The following is a 545-amino-acid chain: Luciferin 4-monooxygenase (545 aa).

Positions S543–L545 match the Microbody targeting signal motif.

It belongs to the ATP-dependent AMP-binding enzyme family. It depends on Mg(2+) as a cofactor.

The protein localises to the peroxisome. It catalyses the reaction firefly D-luciferin + ATP + O2 = firefly oxyluciferin + hnu + AMP + CO2 + diphosphate. Its function is as follows. Produces green light with a wavelength of 562 nm. The chain is Luciferin 4-monooxygenase from Photuris pensylvanica (Pennsylania firefly).